The chain runs to 1303 residues: D-lysergyl-peptide-synthetase subunit 2 (1303 aa).

Positions 256–653 (EWCRWTPSAV…CRKSTQVKLR (398 aa)) are adenylation (A) domain. The Carrier domain maps to 793-869 (APSNDIEEAF…ELARHTKLVA (77 aa)). Residue Ser-830 is modified to O-(pantetheine 4'-phosphoryl)serine. A condensation (C) domain region spans residues 905–1294 (EDVYPCTPLQ…HAAPRTLIGD (390 aa)).

Belongs to the NRP synthetase family.

It functions in the pathway alkaloid biosynthesis; ergot alkaloid biosynthesis. Its function is as follows. D-lysergyl-peptide-synthetase subunit 2; part of the gene cluster that mediates the biosynthesis of fungal ergot alkaloid. DmaW catalyzes the first step of ergot alkaloid biosynthesis by condensing dimethylallyl diphosphate (DMAP) and tryptophan to form 4-dimethylallyl-L-tryptophan. The second step is catalyzed by the methyltransferase easF that methylates 4-dimethylallyl-L-tryptophan in the presence of S-adenosyl-L-methionine, resulting in the formation of 4-dimethylallyl-L-abrine. The catalase easC and the FAD-dependent oxidoreductase easE then transform 4-dimethylallyl-L-abrine to chanoclavine-I which is further oxidized by easD in the presence of NAD(+), resulting in the formation of chanoclavine-I aldehyde. Agroclavine dehydrogenase easG then mediates the conversion of chanoclavine-I aldehyde to agroclavine via a non-enzymatic adduct reaction: the substrate is an iminium intermediate that is formed spontaneously from chanoclavine-I aldehyde in the presence of glutathione. The presence of easA is not required to complete this reaction. Further conversion of agroclavine to paspalic acid is a two-step process involving oxidation of agroclavine to elymoclavine and of elymoclavine to paspalic acid, the second step being performed by the elymoclavine oxidase cloA. Paspalic acid is then further converted to D-lysergic acid. Ergopeptines are assembled from D-lysergic acid and three different amino acids by the D-lysergyl-peptide-synthetases composed each of a monomudular and a trimodular nonribosomal peptide synthetase subunit. LpsB and lpsC encode the monomodular subunits responsible for D-lysergic acid activation and incorporation into the ergopeptine backbone. LpsA1 and A2 subunits encode the trimodular nonribosomal peptide synthetase assembling the tripeptide portion of ergopeptines. LpsA1 is responsible for formation of the major ergopeptine, ergotamine, and lpsA2 for alpha-ergocryptine, the minor ergopeptine of the total alkaloid mixture elaborated by C.purpurea. D-lysergyl-tripeptides are assembled by the nonribosomal peptide synthetases and released as N-(D-lysergyl-aminoacyl)-lactams. Cyclolization of the D-lysergyl-tripeptides is performed by the Fe(2+)/2-ketoglutarate-dependent dioxygenase easH which introduces a hydroxyl group into N-(D-lysergyl-aminoacyl)-lactam at alpha-C of the aminoacyl residue followed by spontaneous condensation with the terminal lactam carbonyl group. The protein is D-lysergyl-peptide-synthetase subunit 2 of Claviceps purpurea (strain 20.1) (Ergot fungus).